Consider the following 906-residue polypeptide: Glutamate receptor 1 (906 aa).

The N-terminal stretch at M1–G18 is a signal peptide. The Extracellular segment spans residues A19–A536. N63, N249, N257, N363, N401, and N406 each carry an N-linked (GlcNAc...) asparagine glycan. The cysteines at positions 75 and 323 are disulfide-linked. 3 residues coordinate L-glutamate: P492, T494, and R499. Residues Y537–V557 traverse the membrane as a helical segment. The Cytoplasmic portion of the chain corresponds to S558 to E584. The segment at residues F585–Q600 is an intramembrane region (helical; Pore-forming). An intramembrane segment occupies Q601–C603. C603 carries the S-palmitoyl cysteine lipid modification. Residues D604–S609 are Cytoplasmic-facing. A helical membrane pass occupies residues L610 to Y630. The Extracellular segment spans residues T631–N805. S645 carries the phosphoserine modification. Residues S668 and T669 each coordinate L-glutamate. The residue at position 710 (S710) is a Phosphoserine. E719 serves as a coordination point for L-glutamate. C732 and C787 form a disulfide bridge. The helical transmembrane segment at V806–I826 threads the bilayer. Topologically, residues E827 to L906 are cytoplasmic. C829 carries the S-palmitoyl cysteine lipid modification. Phosphoserine occurs at positions 849 and 863. The disordered stretch occupies residues R861–S880. The segment covering S863–S872 has biased composition (low complexity). Positions A903–L906 match the PDZ-binding motif.

Belongs to the glutamate-gated ion channel (TC 1.A.10.1) family. GRIA1 subfamily. In terms of assembly, homotetramer or heterotetramer of pore-forming glutamate receptor subunits; heteromeric assembly can be the result of both receptor subtype and flip-flop forms and according the composition, one partner can be dominant with respect to the fast desensitizing current component, whereas the other can determine the steady-state component. Tetramers may be formed by the dimerization of dimers. Found in a complex with GRIA2, GRIA3, GRIA4, CNIH2, CNIH3, CACNG2, CACNG3, CACNG4, CACNG5, CACNG7 and CACNG8. Interacts with HIP1 and RASGRF2. Interacts with SYNDIG1 and GRIA2. Interacts with DLG1 (via C-terminus). Interacts with LRFN1. Interacts with PRKG2. Interacts with CNIH2 and CACNG2. Interacts with CACNG5; this interaction modulates the gating. Interacts (via C-terminus) with PDLIM4 (via LIM domain); this interaction as well as the interaction of PDLIM4 with alpha-actinin is required for their colocalization in early endosomes. Interacts with SNX27 (via PDZ domain); the interaction is required for recycling to the plasma membrane when endocytosed and prevent degradation in lysosomes. Interacts (via PDZ-binding motif) with SHANK3 (via PDZ domain). Interacts with CACNG3; associates GRIA1 with the adapter protein complex 4 (AP-4) to target GRIA1 to the somatodendritic compartment of neurons. Interacts with CACNG2; this interaction mediates traffick to the plasma membrane and modulation of desensitization. Interaction with CNIH2 and CNIH3; this interaction promotes expression at the plasma membrane and extensively modulates their gating properties by slowing deactivation and desensitization kinetics. Found in a complex with GRIA2, GRIA3, GRIA4, DLG4, CACNG8 and CNIH2. In terms of processing, phosphorylated at Ser-645. Phosphorylated at Ser-710 by PKC. Phosphorylated at Ser-849 by PKC, PKA and CAMK2. Phosphorylated at Ser-863 by PKC, PKA and PRKG2. Phosphorylation of Ser-863 is reduced by induction of long-term depression and increased by induction of long-term potentiation. Palmitoylated. Depalmitoylated by CPT1C and upon L-glutamate stimulation. ZDHHC3/GODZ specifically palmitoylates Cys-603, which leads to Golgi retention and decreased cell surface expression. In contrast, Cys-829 palmitoylation does not affect cell surface expression but regulates stimulation-dependent endocytosis.

Its subcellular location is the cell membrane. It is found in the endoplasmic reticulum membrane. The protein localises to the postsynaptic cell membrane. It localises to the postsynaptic density membrane. The protein resides in the cell projection. Its subcellular location is the dendrite. It is found in the dendritic spine. The protein localises to the early endosome membrane. It localises to the recycling endosome membrane. The protein resides in the presynapse. Its subcellular location is the synapse. The enzyme catalyses Ca(2+)(in) = Ca(2+)(out). It carries out the reaction Na(+)(in) = Na(+)(out). The catalysed reaction is Mg(2+)(in) = Mg(2+)(out). It catalyses the reaction Li(+)(in) = Li(+)(out). The enzyme catalyses K(+)(in) = K(+)(out). It carries out the reaction Sr(2+)(in) = Sr(2+)(out). Ionotropic glutamate receptor that functions as a ligand-gated cation channel, gated by L-glutamate and glutamatergic agonists such as alpha-amino-3-hydroxy-5-methyl-4-isoxazolepropionic acid (AMPA), quisqualic acid, and kainic acid. L-glutamate acts as an excitatory neurotransmitter at many synapses in the central nervous system. Binding of the excitatory neurotransmitter L-glutamate induces a conformation change, leading to the opening of the cation channel, and thereby converts the chemical signal to an electrical impulse upon entry of monovalent and divalent cations such as sodium and calcium. The receptor then desensitizes rapidly and enters in a transient inactive state, characterized by the presence of bound agonist. In the presence of CACNG2 or CACNG4 or CACNG7 or CACNG8, shows resensitization which is characterized by a delayed accumulation of current flux upon continued application of L-glutamate. Calcium (Ca(2+)) permeability depends on subunits composition and, heteromeric channels containing edited GRIA2 subunit are calcium-impermeable. Also permeable to other divalents cations such as strontium(2+) and magnesium(2+) and monovalent cations such as potassium(1+) and lithium(1+). This is Glutamate receptor 1 from Macaca fascicularis (Crab-eating macaque).